Reading from the N-terminus, the 286-residue chain is Undecaprenyl-diphosphatase (286 aa).

7 consecutive transmembrane segments (helical) span residues Pro-50 to Phe-70, Leu-97 to Leu-117, Leu-127 to Ala-147, Gly-165 to Ser-185, Ala-200 to Leu-220, Gly-230 to Ile-250, and Thr-262 to Gly-282.

The protein belongs to the UppP family.

Its subcellular location is the cell inner membrane. It catalyses the reaction di-trans,octa-cis-undecaprenyl diphosphate + H2O = di-trans,octa-cis-undecaprenyl phosphate + phosphate + H(+). In terms of biological role, catalyzes the dephosphorylation of undecaprenyl diphosphate (UPP). Confers resistance to bacitracin. This Synechococcus sp. (strain WH7803) protein is Undecaprenyl-diphosphatase.